Consider the following 71-residue polypeptide: Exodeoxyribonuclease 7 small subunit (71 aa).

It belongs to the XseB family. In terms of assembly, heterooligomer composed of large and small subunits.

It localises to the cytoplasm. It catalyses the reaction Exonucleolytic cleavage in either 5'- to 3'- or 3'- to 5'-direction to yield nucleoside 5'-phosphates.. In terms of biological role, bidirectionally degrades single-stranded DNA into large acid-insoluble oligonucleotides, which are then degraded further into small acid-soluble oligonucleotides. This chain is Exodeoxyribonuclease 7 small subunit, found in Streptococcus suis (strain 98HAH33).